A 165-amino-acid chain; its full sequence is Transcription antitermination protein NusB (165 aa).

Positions 1-27 (MISDDTDQFNPRDAKSPEIAKGKSAKR) are disordered. The segment covering 10–21 (NPRDAKSPEIAK) has biased composition (basic and acidic residues).

It belongs to the NusB family.

Its function is as follows. Involved in transcription antitermination. Required for transcription of ribosomal RNA (rRNA) genes. Binds specifically to the boxA antiterminator sequence of the ribosomal RNA (rrn) operons. This chain is Transcription antitermination protein NusB, found in Pseudomonas syringae pv. tomato (strain ATCC BAA-871 / DC3000).